Here is a 270-residue protein sequence, read N- to C-terminus: Putative phosphoenolpyruvate synthase regulatory protein (270 aa).

Position 150–157 (150–157) interacts with ADP; the sequence is GVSRCGKT.

It belongs to the pyruvate, phosphate/water dikinase regulatory protein family. PSRP subfamily.

The catalysed reaction is [pyruvate, water dikinase] + ADP = [pyruvate, water dikinase]-phosphate + AMP + H(+). The enzyme catalyses [pyruvate, water dikinase]-phosphate + phosphate + H(+) = [pyruvate, water dikinase] + diphosphate. Its function is as follows. Bifunctional serine/threonine kinase and phosphorylase involved in the regulation of the phosphoenolpyruvate synthase (PEPS) by catalyzing its phosphorylation/dephosphorylation. The chain is Putative phosphoenolpyruvate synthase regulatory protein from Shewanella sp. (strain ANA-3).